We begin with the raw amino-acid sequence, 261 residues long: Gap junction beta-6 protein (261 aa).

Topologically, residues 1 to 22 (MDWGTLHTFVGGVNKHSTSIGK) are cytoplasmic. The helical transmembrane segment at 23 to 45 (VWVTVLFVFRVMILVVAAQEVWG) threads the bilayer. Over 46 to 75 (DEQEDFVCNTLQPGCRNVCYDHFFPVSHIR) the chain is Extracellular. The chain crosses the membrane as a helical span at residues 76 to 98 (LWALQLIFVSTPALLVAMHVAYY). The Cytoplasmic segment spans residues 99 to 131 (RHEAARRFRRGETRSEFKDLEDIKRQKVRIEGS). The chain crosses the membrane as a helical span at residues 132–154 (LWWTYTSSIFFRIVFEAAFMYVF). The Extracellular portion of the chain corresponds to 155-192 (YFLYNGYHLPWVLKCGIQPCPNLVDCFISRPTEKTVFT). Residues 193–215 (IFMISASVICMLLNVAELCYLLL) traverse the membrane as a helical segment. The Cytoplasmic portion of the chain corresponds to 216-261 (KVCFRRSKRAQTQKAPPNHALKESKQNEMNELISEGGQNAITGFPS).

It belongs to the connexin family. Beta-type (group I) subfamily. In terms of assembly, a connexon is composed of a hexamer of connexins. Interacts with CNST.

It localises to the cell membrane. It is found in the cell junction. The protein localises to the gap junction. In terms of biological role, one gap junction consists of a cluster of closely packed pairs of transmembrane channels, the connexons, through which materials of low MW diffuse from one cell to a neighboring cell. In Bos taurus (Bovine), this protein is Gap junction beta-6 protein (GJB6).